We begin with the raw amino-acid sequence, 528 residues long: Serine/threonine-protein kinase akt-2 (528 aa).

Positions 12–115 (DIVIESWLHK…WIEAIQAVSS (104 aa)) constitute a PH domain. The interval 121–153 (ENAGNTSMQEEDTNGNPSGESDVNMDATSTRSD) is disordered. The segment covering 123–153 (AGNTSMQEEDTNGNPSGESDVNMDATSTRSD) has biased composition (polar residues). Positions 180-437 (FDFLKVLGQG…AREVSRAEFF (258 aa)) constitute a Protein kinase domain. Residues 186-194 (LGQGTFGKV) and K209 each bind ATP. The active-site Proton acceptor is D303. The AGC-kinase C-terminal domain maps to 438-515 (KDVDWEATLR…YYVSGSLERS (78 aa)).

This sequence belongs to the protein kinase superfamily. AGC Ser/Thr protein kinase family. RAC subfamily. In terms of assembly, interacts with pdk-1, sgk-1, akt-1 and daf-16. Part of a complex containing sgk-1, akt-1 and akt-2. Mg(2+) serves as cofactor. In terms of tissue distribution, expressed in neurons, muscle cells of the pharynx, rectal gland cells, and spermatheca.

It carries out the reaction L-seryl-[protein] + ATP = O-phospho-L-seryl-[protein] + ADP + H(+). The catalysed reaction is L-threonyl-[protein] + ATP = O-phospho-L-threonyl-[protein] + ADP + H(+). With respect to regulation, phosphorylated and activated by pdk-1. Acts downstream of PI3 kinase age-1 and kinase pdk-1 in the daf-2/insulin receptor-like transduction pathway. Essential role in regulating developmental arrest at the dauer stage. Phosphorylates Forkhead-related daf-16 and the longevity-promoting skn-1 transcription factors, which inhibits their entry into the nucleus and antagonizes their functions. Role in immune function and pathogen resistance. Downstream of age-1 and together with akt-1 and sgk-1, promotes cell survival during embryonic development. Plays a role in maintaining the gonadal basement membrane through antagonizing akt-1 activity. This Caenorhabditis elegans protein is Serine/threonine-protein kinase akt-2.